Reading from the N-terminus, the 769-residue chain is Phenylalanine--tRNA ligase beta subunit (769 aa).

The 102-residue stretch at 40–141 folds into the tRNA-binding domain; that stretch reads GKLLTIARVA…GEPIPGCEPD (102 aa). The region spanning 389–467 is the B5 domain; it reads PAPPPIELPL…RMIGYDSIAP (79 aa). Mg(2+) is bound by residues D445, D451, E454, and E455. Positions 676–768 constitute an FDX-ACB domain; that stretch reads RRYPSSAFDL…GMRAKGYELR (93 aa).

The protein belongs to the phenylalanyl-tRNA synthetase beta subunit family. Type 1 subfamily. Tetramer of two alpha and two beta subunits. Mg(2+) is required as a cofactor.

It localises to the cytoplasm. The catalysed reaction is tRNA(Phe) + L-phenylalanine + ATP = L-phenylalanyl-tRNA(Phe) + AMP + diphosphate + H(+). In Solibacter usitatus (strain Ellin6076), this protein is Phenylalanine--tRNA ligase beta subunit.